The following is a 204-amino-acid chain: LexA repressor (204 aa).

The segment at residues 27-47 (VREIGEAVGLASSSTVHGHLA) is a DNA-binding region (H-T-H motif). Residues Ser-126 and Lys-164 each act as for autocatalytic cleavage activity in the active site.

The protein belongs to the peptidase S24 family. Homodimer.

The enzyme catalyses Hydrolysis of Ala-|-Gly bond in repressor LexA.. Its function is as follows. Represses a number of genes involved in the response to DNA damage (SOS response), including recA and lexA. In the presence of single-stranded DNA, RecA interacts with LexA causing an autocatalytic cleavage which disrupts the DNA-binding part of LexA, leading to derepression of the SOS regulon and eventually DNA repair. The protein is LexA repressor of Listeria welshimeri serovar 6b (strain ATCC 35897 / DSM 20650 / CCUG 15529 / CIP 8149 / NCTC 11857 / SLCC 5334 / V8).